The sequence spans 295 residues: Indole-3-glycerol phosphate synthase (295 aa).

It belongs to the TrpC family.

The catalysed reaction is 1-(2-carboxyphenylamino)-1-deoxy-D-ribulose 5-phosphate + H(+) = (1S,2R)-1-C-(indol-3-yl)glycerol 3-phosphate + CO2 + H2O. The protein operates within amino-acid biosynthesis; L-tryptophan biosynthesis; L-tryptophan from chorismate: step 4/5. The sequence is that of Indole-3-glycerol phosphate synthase from Prochlorococcus marinus (strain MIT 9515).